We begin with the raw amino-acid sequence, 38 residues long: Allatostatin-C (38 aa).

Positions 1 to 19 are excised as a propeptide; sequence MRRALDGPGSSSLDTRQAD. The residue at position 22 (Q22) is a Pyrrolidone carboxylic acid; partial.

This sequence belongs to the allatostatin family. In terms of tissue distribution, in its non-pyroglutamate form, expressed in antennal lobe (AL), corpora cardiaca (CC), corpora allata (CA) and gnathal ganglion (GNG) with expression in AL detected in most animals and expression in CC, CA and GNG detected in few animals (at protein level). In its pyroglutamate form, expressed in antennal lobe (AL), corpora cardiaca (CC) and corpora allata (CA) with expression detected in few animals (at protein level). Not expressed in GNG (protein level).

The protein localises to the secreted. Its function is as follows. Strongly inhibits juvenile hormone biosynthesis. The chain is Allatostatin-C from Agrotis ipsilon (Black cutworm moth).